A 137-amino-acid polypeptide reads, in one-letter code: MLQPKRRKYRKEQKGRNTGVATRGSSVAFGDFGLKAVGRGRLTARQIESARRAMTRHIKRGGRIWIRIFPDKPISQKPAEVRMGNGKGNPEYYVAEIQPGKVLYEMDGVDEQLAREAFKLAAAKLPLQTTFVIRHLG.

Positions methionine 1–glutamine 13 are enriched in basic residues. The segment at methionine 1–threonine 22 is disordered.

It belongs to the universal ribosomal protein uL16 family. As to quaternary structure, part of the 50S ribosomal subunit.

In terms of biological role, binds 23S rRNA and is also seen to make contacts with the A and possibly P site tRNAs. This Polynucleobacter asymbioticus (strain DSM 18221 / CIP 109841 / QLW-P1DMWA-1) (Polynucleobacter necessarius subsp. asymbioticus) protein is Large ribosomal subunit protein uL16.